We begin with the raw amino-acid sequence, 113 residues long: Neocarzinostatin (113 aa).

2 disulfide bridges follow: Cys37/Cys47 and Cys88/Cys93.

The protein belongs to the neocarzinostatin family.

Its function is as follows. NCS has antibiotic activity (for Gram-positive bacteria) and antitumor activity (for certain mouse tumors). NCS binds non-covalently to a chromophore which is the cytotoxic and mutagenic component of the antibiotic. The chromophore binds to DNA as a weak intercalator and causes single- and double-strand breaks. This is Neocarzinostatin (ncsA) from Streptomyces malayensis.